The chain runs to 594 residues: UvrABC system protein C (594 aa).

Residues 13 to 99 enclose the GIY-YIG domain; the sequence is NSSGVYQYFD…IKQLKPKYNI (87 aa). The UVR domain maps to 205-240; sequence DRLIKELELKMERLSSNLRFEEALIYRDRIAKIQKI.

Belongs to the UvrC family. In terms of assembly, interacts with UvrB in an incision complex.

The protein localises to the cytoplasm. Its function is as follows. The UvrABC repair system catalyzes the recognition and processing of DNA lesions. UvrC both incises the 5' and 3' sides of the lesion. The N-terminal half is responsible for the 3' incision and the C-terminal half is responsible for the 5' incision. This chain is UvrABC system protein C, found in Helicobacter pylori (strain G27).